The primary structure comprises 151 residues: Large ribosomal subunit protein bL9 (151 aa).

It belongs to the bacterial ribosomal protein bL9 family.

Its function is as follows. Binds to the 23S rRNA. This chain is Large ribosomal subunit protein bL9, found in Acidobacterium capsulatum (strain ATCC 51196 / DSM 11244 / BCRC 80197 / JCM 7670 / NBRC 15755 / NCIMB 13165 / 161).